The sequence spans 54 residues: Large ribosomal subunit protein bL33A (54 aa).

The protein belongs to the bacterial ribosomal protein bL33 family.

The sequence is that of Large ribosomal subunit protein bL33A from Streptomyces griseus subsp. griseus (strain JCM 4626 / CBS 651.72 / NBRC 13350 / KCC S-0626 / ISP 5235).